Consider the following 273-residue polypeptide: 4-hydroxybenzoate octaprenyltransferase (273 aa).

8 consecutive transmembrane segments (helical) span residues 7–27 (IGIY…SEGF), 30–50 (LKLL…GCVI), 83–103 (FFVL…WLTI), 122–142 (WTYF…LMAF), 146–166 (LNEI…WTVI), 197–217 (LIIG…SNVF), 221–241 (ISYH…QYLI), and 253–273 (FLHN…SVGL).

This sequence belongs to the UbiA prenyltransferase family. Mg(2+) serves as cofactor.

It is found in the cell inner membrane. The catalysed reaction is all-trans-octaprenyl diphosphate + 4-hydroxybenzoate = 4-hydroxy-3-(all-trans-octaprenyl)benzoate + diphosphate. The protein operates within cofactor biosynthesis; ubiquinone biosynthesis. Its function is as follows. Catalyzes the prenylation of para-hydroxybenzoate (PHB) with an all-trans polyprenyl group. Mediates the second step in the final reaction sequence of ubiquinone-8 (UQ-8) biosynthesis, which is the condensation of the polyisoprenoid side chain with PHB, generating the first membrane-bound Q intermediate 3-octaprenyl-4-hydroxybenzoate. This is 4-hydroxybenzoate octaprenyltransferase from Vesicomyosocius okutanii subsp. Calyptogena okutanii (strain HA).